The following is a 580-amino-acid chain: L-aspartate oxidase (580 aa).

Residues 26–29 (SGVA), K49, 56–63 (STRWAQGG), and D227 contribute to the FAD site. R297 serves as the catalytic Proton donor/acceptor. FAD contacts are provided by residues E382 and 398-399 (SL). Residues 556–580 (VHTTDTPEFPPTVHGAQPTHRPQEQ) are disordered.

The protein belongs to the FAD-dependent oxidoreductase 2 family. NadB subfamily. It depends on FAD as a cofactor.

It localises to the cytoplasm. The catalysed reaction is L-aspartate + O2 = iminosuccinate + H2O2. It participates in cofactor biosynthesis; NAD(+) biosynthesis; iminoaspartate from L-aspartate (oxidase route): step 1/1. In terms of biological role, catalyzes the oxidation of L-aspartate to iminoaspartate, the first step in the de novo biosynthesis of NAD(+). This chain is L-aspartate oxidase (nadB), found in Streptomyces coelicolor (strain ATCC BAA-471 / A3(2) / M145).